The primary structure comprises 287 residues: Large ribosomal subunit protein uL2 (287 aa).

Disordered regions lie at residues 1 to 30 and 211 to 287; these read MGIRNYRPYTPGTRQKSVSDFSEITHDQPE and NRWK…GRQS. Residues 12-22 show a composition bias toward polar residues; that stretch reads GTRQKSVSDFS. Composition is skewed to basic residues over residues 211–220 and 258–287; these read NRWKGRRPKV and KTRKKKKLSNALIVRRRRKSSKRGRGGRQS.

The protein belongs to the universal ribosomal protein uL2 family. As to quaternary structure, part of the 50S ribosomal subunit. Forms a bridge to the 30S subunit in the 70S ribosome.

In terms of biological role, one of the primary rRNA binding proteins. Required for association of the 30S and 50S subunits to form the 70S ribosome, for tRNA binding and peptide bond formation. It has been suggested to have peptidyltransferase activity; this is somewhat controversial. Makes several contacts with the 16S rRNA in the 70S ribosome. This chain is Large ribosomal subunit protein uL2, found in Cyanothece sp. (strain PCC 7425 / ATCC 29141).